Consider the following 498-residue polypeptide: Histidine--tRNA ligase (498 aa).

The protein belongs to the class-II aminoacyl-tRNA synthetase family. Homodimer.

Its subcellular location is the cytoplasm. It carries out the reaction tRNA(His) + L-histidine + ATP = L-histidyl-tRNA(His) + AMP + diphosphate + H(+). This chain is Histidine--tRNA ligase, found in Mycoplasmopsis synoviae (strain 53) (Mycoplasma synoviae).